The chain runs to 450 residues: Ornithine decarboxylase (450 aa).

At Lys59 the chain carries N6-(pyridoxal phosphate)lysine. Residues Ser190, Gly227, and 264–267 (EPGR) each bind pyridoxal 5'-phosphate. The residue at position 293 (Ser293) is a Phosphoserine; by CK2. Residue 321–322 (YD) coordinates substrate. Cys350 acts as the Proton donor; shared with dimeric partner in catalysis. Asp351 lines the substrate pocket. Residue Tyr379 participates in pyridoxal 5'-phosphate binding.

It belongs to the Orn/Lys/Arg decarboxylase class-II family. As to quaternary structure, homodimer. Only the dimer is catalytically active, as the active sites are constructed of residues from both monomers. Pyridoxal 5'-phosphate serves as cofactor.

The enzyme catalyses L-ornithine + H(+) = putrescine + CO2. Its pathway is amine and polyamine biosynthesis; putrescine biosynthesis via L-ornithine pathway; putrescine from L-ornithine: step 1/1. Inhibited by antizymes (AZs) in response to polyamine levels. AZs inhibit the assembly of the functional homodimer by binding to ODC monomers and targeting them for ubiquitin-independent proteolytic destruction by the 26S proteasome. Catalyzes the first and rate-limiting step of polyamine biosynthesis that converts ornithine into putrescine, which is the precursor for the polyamines, spermidine and spermine. Polyamines are essential for cell proliferation and are implicated in cellular processes, ranging from DNA replication to apoptosis. The polypeptide is Ornithine decarboxylase (ODC1) (Gallus gallus (Chicken)).